Reading from the N-terminus, the 257-residue chain is Major prion protein (257 aa).

The N-terminal stretch at 1–24 (MVKSHIGSWLLVLFVATWSDIGFC) is a signal peptide. Positions 25-234 (KKRPKPGGGW…ESEAYYQRGA (210 aa)) are interaction with GRB2, ERI3 and SYN1. The interval 27-114 (RPKPGGGWNT…KPSKPKTNMK (88 aa)) is disordered. 5 tandem repeats follow at residues 54–62 (PQGGGGWGQ), 63–70 (PHGGGWGQ), 71–78 (PHGGGWGQ), 79–86 (PHGGGWGQ), and 87–95 (PHGGGGWGQ). Residues 54–95 (PQGGGGWGQPHGGGWGQPHGGGWGQPHGGGWGQPHGGGGWGQ) are 5 X 8 AA tandem repeats of P-H-G-G-G-W-G-Q. Over residues 55 to 101 (QGGGGWGQPHGGGWGQPHGGGWGQPHGGGWGQPHGGGGWGQGGGSHG) the composition is skewed to gly residues. Residues H64, G65, G66, H72, G73, G74, H80, G81, G82, H88, G90, and G91 each coordinate Cu(2+). C183 and C218 are oxidised to a cystine. N-linked (GlcNAc...) asparagine glycosylation is found at N185 and N201. A lipid anchor (GPI-anchor amidated alanine) is attached at A234. Positions 235-257 (SAILFSPPPVILLISLLILLIVG) are cleaved as a propeptide — removed in mature form.

This sequence belongs to the prion family. In terms of assembly, monomer and homodimer. Has a tendency to aggregate into amyloid fibrils containing a cross-beta spine, formed by a steric zipper of superposed beta-strands. Soluble oligomers may represent an intermediate stage on the path to fibril formation. Copper binding may promote oligomerization. Interacts with GRB2, APP, ERI3/PRNPIP and SYN1. Mislocalized cytosolically exposed PrP interacts with MGRN1; this interaction alters MGRN1 subcellular location and causes lysosomal enlargement. Interacts with KIAA1191.

Its subcellular location is the cell membrane. It localises to the golgi apparatus. Its primary physiological function is unclear. Has cytoprotective activity against internal or environmental stresses. May play a role in neuronal development and synaptic plasticity. May be required for neuronal myelin sheath maintenance. May play a role in iron uptake and iron homeostasis. Soluble oligomers are toxic to cultured neuroblastoma cells and induce apoptosis (in vitro). Association with GPC1 (via its heparan sulfate chains) targets PRNP to lipid rafts. Also provides Cu(2+) or Zn(2+) for the ascorbate-mediated GPC1 deaminase degradation of its heparan sulfate side chains. The polypeptide is Major prion protein (PRNP) (Mustela putorius furo (European domestic ferret)).